Reading from the N-terminus, the 342-residue chain is Elongation factor Ts (342 aa).

The tract at residues 79 to 82 is involved in Mg(2+) ion dislocation from EF-Tu; it reads TDFV.

The protein belongs to the EF-Ts family.

It is found in the cytoplasm. Functionally, associates with the EF-Tu.GDP complex and induces the exchange of GDP to GTP. It remains bound to the aminoacyl-tRNA.EF-Tu.GTP complex up to the GTP hydrolysis stage on the ribosome. The sequence is that of Elongation factor Ts from Lactococcus lactis subsp. cremoris (strain MG1363).